Reading from the N-terminus, the 548-residue chain is CTP synthase (548 aa).

The amidoligase domain stretch occupies residues 1-265 (MTRYIFVTGG…DDIICDKLRI (265 aa)). Serine 13 contributes to the CTP binding site. UTP is bound at residue serine 13. ATP contacts are provided by residues 14–19 (SLGKGI) and aspartate 71. Mg(2+) is bound by residues aspartate 71 and glutamate 139. CTP contacts are provided by residues 146–148 (DIE), 186–191 (KTKPTQ), and lysine 222. Residues 186-191 (KTKPTQ) and lysine 222 contribute to the UTP site. The region spanning 290 to 541 (NIAMVGKYME…VNAALAYKAA (252 aa)) is the Glutamine amidotransferase type-1 domain. Glycine 351 contacts L-glutamine. Cysteine 378 (nucleophile; for glutamine hydrolysis) is an active-site residue. L-glutamine contacts are provided by residues 379-382 (LGMQ), glutamate 402, and arginine 469. Active-site residues include histidine 514 and glutamate 516.

Belongs to the CTP synthase family. In terms of assembly, homotetramer.

It catalyses the reaction UTP + L-glutamine + ATP + H2O = CTP + L-glutamate + ADP + phosphate + 2 H(+). It carries out the reaction L-glutamine + H2O = L-glutamate + NH4(+). The enzyme catalyses UTP + NH4(+) + ATP = CTP + ADP + phosphate + 2 H(+). Its pathway is pyrimidine metabolism; CTP biosynthesis via de novo pathway; CTP from UDP: step 2/2. Allosterically activated by GTP, when glutamine is the substrate; GTP has no effect on the reaction when ammonia is the substrate. The allosteric effector GTP functions by stabilizing the protein conformation that binds the tetrahedral intermediate(s) formed during glutamine hydrolysis. Inhibited by the product CTP, via allosteric rather than competitive inhibition. In terms of biological role, catalyzes the ATP-dependent amination of UTP to CTP with either L-glutamine or ammonia as the source of nitrogen. Regulates intracellular CTP levels through interactions with the four ribonucleotide triphosphates. This Chromohalobacter salexigens (strain ATCC BAA-138 / DSM 3043 / CIP 106854 / NCIMB 13768 / 1H11) protein is CTP synthase.